We begin with the raw amino-acid sequence, 173 residues long: CDP-archaeol synthase (173 aa).

Transmembrane regions (helical) follow at residues Gly15 to Gly35, Gly59 to Gly79, Ala84 to Val104, Val118 to Trp138, and Gly142 to Ile162.

This sequence belongs to the CDP-archaeol synthase family. It depends on Mg(2+) as a cofactor.

The protein resides in the cell membrane. It carries out the reaction 2,3-bis-O-(geranylgeranyl)-sn-glycerol 1-phosphate + CTP + H(+) = CDP-2,3-bis-O-(geranylgeranyl)-sn-glycerol + diphosphate. Its pathway is membrane lipid metabolism; glycerophospholipid metabolism. Its function is as follows. Catalyzes the formation of CDP-2,3-bis-(O-geranylgeranyl)-sn-glycerol (CDP-archaeol) from 2,3-bis-(O-geranylgeranyl)-sn-glycerol 1-phosphate (DGGGP) and CTP. This reaction is the third ether-bond-formation step in the biosynthesis of archaeal membrane lipids. The polypeptide is CDP-archaeol synthase (Methanopyrus kandleri (strain AV19 / DSM 6324 / JCM 9639 / NBRC 100938)).